The primary structure comprises 127 residues: Large ribosomal subunit protein bL17 (127 aa).

The protein belongs to the bacterial ribosomal protein bL17 family. In terms of assembly, part of the 50S ribosomal subunit. Contacts protein L32.

The protein is Large ribosomal subunit protein bL17 of Escherichia fergusonii (strain ATCC 35469 / DSM 13698 / CCUG 18766 / IAM 14443 / JCM 21226 / LMG 7866 / NBRC 102419 / NCTC 12128 / CDC 0568-73).